Here is a 219-residue protein sequence, read N- to C-terminus: Thiamine-phosphate synthase (219 aa).

4-amino-2-methyl-5-(diphosphooxymethyl)pyrimidine contacts are provided by residues 48-52 (QFRQK) and asparagine 84. Mg(2+) contacts are provided by aspartate 85 and aspartate 104. Serine 123 is a 4-amino-2-methyl-5-(diphosphooxymethyl)pyrimidine binding site. 150 to 152 (TPS) contacts 2-[(2R,5Z)-2-carboxy-4-methylthiazol-5(2H)-ylidene]ethyl phosphate. Lysine 153 contributes to the 4-amino-2-methyl-5-(diphosphooxymethyl)pyrimidine binding site. Residues glycine 181 and 199 to 200 (IS) each bind 2-[(2R,5Z)-2-carboxy-4-methylthiazol-5(2H)-ylidene]ethyl phosphate.

This sequence belongs to the thiamine-phosphate synthase family. The cofactor is Mg(2+).

The enzyme catalyses 2-[(2R,5Z)-2-carboxy-4-methylthiazol-5(2H)-ylidene]ethyl phosphate + 4-amino-2-methyl-5-(diphosphooxymethyl)pyrimidine + 2 H(+) = thiamine phosphate + CO2 + diphosphate. It carries out the reaction 2-(2-carboxy-4-methylthiazol-5-yl)ethyl phosphate + 4-amino-2-methyl-5-(diphosphooxymethyl)pyrimidine + 2 H(+) = thiamine phosphate + CO2 + diphosphate. The catalysed reaction is 4-methyl-5-(2-phosphooxyethyl)-thiazole + 4-amino-2-methyl-5-(diphosphooxymethyl)pyrimidine + H(+) = thiamine phosphate + diphosphate. It participates in cofactor biosynthesis; thiamine diphosphate biosynthesis; thiamine phosphate from 4-amino-2-methyl-5-diphosphomethylpyrimidine and 4-methyl-5-(2-phosphoethyl)-thiazole: step 1/1. In terms of biological role, condenses 4-methyl-5-(beta-hydroxyethyl)thiazole monophosphate (THZ-P) and 2-methyl-4-amino-5-hydroxymethyl pyrimidine pyrophosphate (HMP-PP) to form thiamine monophosphate (TMP). This is Thiamine-phosphate synthase from Helicobacter pylori (strain HPAG1).